Consider the following 205-residue polypeptide: RPW8-like protein 2 (205 aa).

The RPW8 domain occupies 1-153 (MPLTEIIAGA…IMGQPIDCII (153 aa)). Residues 7-23 (IAGAALGLALQILHEAI) traverse the membrane as a helical segment. Coiled coils occupy residues 70–92 (EDLK…LKRR) and 125–147 (ADIK…IMGQ).

Belongs to the plant RPW8 protein family.

Its subcellular location is the membrane. Functionally, probable disease resistance (R) protein. The polypeptide is RPW8-like protein 2 (Arabidopsis thaliana (Mouse-ear cress)).